Consider the following 1275-residue polypeptide: Mediator of RNA polymerase II transcription subunit 33B (1275 aa).

The span at 772-791 shows a compositional bias: low complexity; that stretch reads GSQSLTPSSGSSSLSTSGGD. The interval 772 to 792 is disordered; that stretch reads GSQSLTPSSGSSSLSTSGGDD.

The protein belongs to the Mediator complex subunit 33 family. As to quaternary structure, component of the Mediator complex. Ubiquitous.

It is found in the nucleus. Component of the Mediator complex, a coactivator involved in the regulated transcription of nearly all RNA polymerase II-dependent genes. Mediator functions as a bridge to convey information from gene-specific regulatory proteins to the basal RNA polymerase II transcription machinery. The Mediator complex, having a compact conformation in its free form, is recruited to promoters by direct interactions with regulatory proteins and serves for the assembly of a functional preinitiation complex with RNA polymerase II and the general transcription factors. Involved in the repression of phenylpropanoid biosynthesis. May compete with MED33B for common binding partners or for occupancy in Mediator. This Arabidopsis thaliana (Mouse-ear cress) protein is Mediator of RNA polymerase II transcription subunit 33B (MED33B).